Consider the following 248-residue polypeptide: PACRG-like protein (248 aa).

At Met1 the chain carries N-acetylmethionine. A disordered region spans residues 1-72 (MQRSECSGGV…NPKTINPFGE (72 aa)). Composition is skewed to polar residues over residues 14 to 29 (NRAT…SSTQ) and 36 to 45 (VQRSKSSSLT). At Ser47 the chain carries Phosphoserine.

The sequence is that of PACRG-like protein (Pacrgl) from Mus musculus (Mouse).